The sequence spans 125 residues: Phosphoribosyl-AMP cyclohydrolase (125 aa).

Position 74 (Asp-74) interacts with Mg(2+). Cys-75 lines the Zn(2+) pocket. Mg(2+) is bound by residues Asp-76 and Asp-78. Residues Cys-92 and Cys-99 each coordinate Zn(2+).

It belongs to the PRA-CH family. In terms of assembly, homodimer. Requires Mg(2+) as cofactor. Zn(2+) serves as cofactor.

The protein resides in the cytoplasm. It carries out the reaction 1-(5-phospho-beta-D-ribosyl)-5'-AMP + H2O = 1-(5-phospho-beta-D-ribosyl)-5-[(5-phospho-beta-D-ribosylamino)methylideneamino]imidazole-4-carboxamide. Its pathway is amino-acid biosynthesis; L-histidine biosynthesis; L-histidine from 5-phospho-alpha-D-ribose 1-diphosphate: step 3/9. Functionally, catalyzes the hydrolysis of the adenine ring of phosphoribosyl-AMP. This Trichlorobacter lovleyi (strain ATCC BAA-1151 / DSM 17278 / SZ) (Geobacter lovleyi) protein is Phosphoribosyl-AMP cyclohydrolase.